The primary structure comprises 2207 residues: Mediator of RNA polymerase II transcription subunit 13-like (2207 aa).

A compositionally biased stretch (polar residues) spans 337–355 (VQSAASHLGSQDGGMSTMH). 4 disordered regions span residues 337-368 (VQSA…PKLH), 384-403 (AQSK…AAHS), 431-479 (VGPS…KRPL), and 519-574 (KYDK…VPVN). A compositionally biased stretch (basic residues) spans 356-368 (SPKRSRKTPPKLH). Residues 384 to 394 (AQSKRSQMSTP) are compositionally biased toward polar residues. Residues 442 to 453 (PGFSAGLPSSSS) show a composition bias toward low complexity. The span at 463-475 (KTTERQEKGDKLQ) shows a compositional bias: basic and acidic residues. Positions 528-539 (SRNTSKQMNLNP) are enriched in polar residues. Positions 546-555 (PISPLPPTLS) are enriched in pro residues. Residues serine 548 and serine 555 each carry the phosphoserine modification. The LXXLL motif 1 signature appears at 664–668 (LQRLL). Basic and acidic residues predominate over residues 731 to 747 (GTEKDSLKKNKSEDGFG). Residues 731-767 (GTEKDSLKKNKSEDGFGTKDVTTPGHSTPVPDGKNAM) are disordered. A phosphoserine mark is found at serine 812 and serine 821. The interval 816-847 (ELGAVSPALRSSKMPTVGTEERPPGKDGRAAG) is disordered. Residues 834–844 (TEERPPGKDGR) show a composition bias toward basic and acidic residues. Residue serine 918 is modified to Phosphoserine. Residues 1004–1091 (DPDYVNTPQM…STTRPLNSVE (88 aa)) are disordered. Positions 1009–1019 (NTPQMNTPVTL) are enriched in polar residues. The segment covering 1020 to 1031 (NSAAPASNSGAG) has biased composition (low complexity). The segment covering 1072–1087 (TDQGSPASTPSTTRPL) has biased composition (polar residues). The LXXLL motif 2 signature appears at 1224 to 1228 (LLLLL). Positions 1379–1400 (LPIPTLLVGYDKEFLTISPFSL) are leucine-zipper. Disordered regions lie at residues 1523–1652 (LMPP…SVTE) and 2042–2077 (GNLH…QGER). Residues 1541 to 1593 (PGNAGSLPSNSGSGAPPAGSAFNPTSSSSANPTTSSSSASSGPPGSSAASAPG) are compositionally biased toward low complexity. Polar residues-rich tracts occupy residues 1612 to 1624 (QNPS…TDRT) and 1635 to 1649 (PGQS…GQDS). Phosphoserine is present on serine 2080.

Belongs to the Mediator complex subunit 13 family. Component of the Mediator complex, which is composed of MED1, MED4, MED6, MED7, MED8, MED9, MED10, MED11, MED12, MED13, MED13L, MED14, MED15, MED16, MED17, MED18, MED19, MED20, MED21, MED22, MED23, MED24, MED25, MED26, MED27, MED29, MED30, MED31, CCNC, CDK8 and CDC2L6/CDK11. The MED12, MED13, CCNC and CDK8 subunits form a distinct module termed the CDK8 module. Mediator containing the CDK8 module is less active than Mediator lacking this module in supporting transcriptional activation. Individual preparations of the Mediator complex lacking one or more distinct subunits have been variously termed ARC, CRSP, DRIP, PC2, SMCC and TRAP. In terms of tissue distribution, highly expressed in heart and weakly expressed in brain, spleen, lung, liver, kidney and testis.

It localises to the nucleus. Functionally, component of the Mediator complex, a coactivator involved in the regulated transcription of nearly all RNA polymerase II-dependent genes. Mediator functions as a bridge to convey information from gene-specific regulatory proteins to the basal RNA polymerase II transcription machinery. Mediator is recruited to promoters by direct interactions with regulatory proteins and serves as a scaffold for the assembly of a functional preinitiation complex with RNA polymerase II and the general transcription factors. This subunit may specifically regulate transcription of targets of the Wnt signaling pathway and SHH signaling pathway. This Mus musculus (Mouse) protein is Mediator of RNA polymerase II transcription subunit 13-like (Med13l).